Reading from the N-terminus, the 145-residue chain is Galectin-5 (145 aa).

The residue at position 2 (Ser2) is an N-acetylserine. Residues 17-145 (FFTSIPNGLY…GDIQLTHVET (129 aa)) form the Galectin domain. 77–83 (WGPEERS) provides a ligand contact to a beta-D-galactoside.

As to quaternary structure, monomer. In terms of tissue distribution, erythrocytes.

In terms of biological role, may function in erythrocyte differentiation. The chain is Galectin-5 (Lgals5) from Rattus norvegicus (Rat).